The sequence spans 260 residues: 2-oxo-tetronate isomerase (260 aa).

The Proton donor/acceptor role is filled by Glu-143. Positions 143, 178, 204, and 240 each coordinate Mg(2+). Glu-240 functions as the Proton donor/acceptor in the catalytic mechanism.

The protein belongs to the hyi family. OtnI subfamily.

It carries out the reaction 2-dehydro-L-erythronate = 3-dehydro-L-erythronate. The catalysed reaction is 2-dehydro-D-erythronate = 3-dehydro-D-erythronate. Functionally, catalyzes the isomerization of 2-oxo-tetronate to 3-oxo-tetronate. The sequence is that of 2-oxo-tetronate isomerase from Cupriavidus necator (strain ATCC 17699 / DSM 428 / KCTC 22496 / NCIMB 10442 / H16 / Stanier 337) (Ralstonia eutropha).